The following is a 132-amino-acid chain: Small ribosomal subunit protein uS8 (132 aa).

It belongs to the universal ribosomal protein uS8 family. In terms of assembly, part of the 30S ribosomal subunit. Contacts proteins S5 and S12.

In terms of biological role, one of the primary rRNA binding proteins, it binds directly to 16S rRNA central domain where it helps coordinate assembly of the platform of the 30S subunit. In Chelativorans sp. (strain BNC1), this protein is Small ribosomal subunit protein uS8.